We begin with the raw amino-acid sequence, 200 residues long: Late protein I196L (200 aa).

A run of 2 repeats spans residues 28 to 48 (SNSL…PTTS) and 49 to 69 (SNSL…PTTS). One copy of the 3; approximate repeat lies at 70-91 (SNYLTSAISTNISDKEEDTPFS).

The protein belongs to the asfivirus I196L family.

In African swine fever virus (isolate Tick/South Africa/Pretoriuskop Pr4/1996) (ASFV), this protein is Late protein I196L.